We begin with the raw amino-acid sequence, 231 residues long: Ion-translocating oxidoreductase complex subunit E (231 aa).

6 consecutive transmembrane segments (helical) span residues 18–38 (ALVQ…ATNA), 39–59 (LGLG…ISTL), 63–83 (TPAE…VSAV), 86–106 (LINA…PLIV), 125–145 (ALSA…MFVL), and 182–202 (PFLL…MLAG).

Belongs to the NqrDE/RnfAE family. The complex is composed of six subunits: RsxA, RsxB, RsxC, RsxD, RsxE and RsxG.

Its subcellular location is the cell inner membrane. In terms of biological role, part of a membrane-bound complex that couples electron transfer with translocation of ions across the membrane. Required to maintain the reduced state of SoxR. The sequence is that of Ion-translocating oxidoreductase complex subunit E from Shigella boydii serotype 18 (strain CDC 3083-94 / BS512).